Reading from the N-terminus, the 680-residue chain is tRNA 5-methylaminomethyl-2-thiouridine biosynthesis bifunctional protein MnmC (680 aa).

The interval methionine 1–proline 267 is tRNA (mnm(5)s(2)U34)-methyltransferase. Residues isoleucine 273–leucine 680 form an FAD-dependent cmnm(5)s(2)U34 oxidoreductase region.

The protein in the N-terminal section; belongs to the methyltransferase superfamily. tRNA (mnm(5)s(2)U34)-methyltransferase family. This sequence in the C-terminal section; belongs to the DAO family. FAD is required as a cofactor.

Its subcellular location is the cytoplasm. The enzyme catalyses 5-aminomethyl-2-thiouridine(34) in tRNA + S-adenosyl-L-methionine = 5-methylaminomethyl-2-thiouridine(34) in tRNA + S-adenosyl-L-homocysteine + H(+). In terms of biological role, catalyzes the last two steps in the biosynthesis of 5-methylaminomethyl-2-thiouridine (mnm(5)s(2)U) at the wobble position (U34) in tRNA. Catalyzes the FAD-dependent demodification of cmnm(5)s(2)U34 to nm(5)s(2)U34, followed by the transfer of a methyl group from S-adenosyl-L-methionine to nm(5)s(2)U34, to form mnm(5)s(2)U34. In Shewanella sp. (strain W3-18-1), this protein is tRNA 5-methylaminomethyl-2-thiouridine biosynthesis bifunctional protein MnmC.